The sequence spans 319 residues: Malate dehydrogenase (319 aa).

Residues 10 to 15 (GAGQIG) and Asp34 contribute to the NAD(+) site. The substrate site is built by Arg85 and Arg91. NAD(+) contacts are provided by residues Asn98 and 121–123 (ITN). Substrate is bound by residues Asn123 and Arg154. Catalysis depends on His178, which acts as the Proton acceptor.

It belongs to the LDH/MDH superfamily. MDH type 3 family.

It catalyses the reaction (S)-malate + NAD(+) = oxaloacetate + NADH + H(+). Its function is as follows. Catalyzes the reversible oxidation of malate to oxaloacetate. The polypeptide is Malate dehydrogenase (Rhodospirillum centenum (strain ATCC 51521 / SW)).